Reading from the N-terminus, the 332-residue chain is L-lactate dehydrogenase A chain (332 aa).

An N-acetylalanine modification is found at A2. K5 bears the N6-acetyllysine; alternate mark. K5 is modified (N6-succinyllysine; alternate). K14 is subject to N6-acetyllysine. 29–57 (GAVGMACAISILMKELADEIALVDVMEDK) lines the NAD(+) pocket. K57 carries the N6-acetyllysine; alternate modification. K57 is covalently cross-linked (Glycyl lysine isopeptide (Lys-Gly) (interchain with G-Cter in SUMO2); alternate). K81 is modified (N6-acetyllysine). R99 is an NAD(+) binding site. R106 is a substrate binding site. K118 carries the post-translational modification N6-acetyllysine; alternate. At K118 the chain carries N6-succinyllysine; alternate. N6-acetyllysine is present on K126. N138 lines the NAD(+) pocket. Substrate contacts are provided by N138 and R169. H193 acts as the Proton acceptor in catalysis. N6-acetyllysine is present on residues K224 and K232. Y239 bears the Phosphotyrosine mark. Position 243 is an N6-acetyllysine (K243). Position 248 (T248) interacts with substrate. T309 is modified (phosphothreonine). At K318 the chain carries N6-acetyllysine; alternate. K318 carries the post-translational modification N6-succinyllysine; alternate. Phosphothreonine is present on T322.

It belongs to the LDH/MDH superfamily. LDH family. Homotetramer. Interacts with PTEN upstream reading frame protein MP31. ISGylated.

The protein localises to the cytoplasm. The enzyme catalyses (S)-lactate + NAD(+) = pyruvate + NADH + H(+). Its pathway is fermentation; pyruvate fermentation to lactate; (S)-lactate from pyruvate: step 1/1. In terms of biological role, interconverts simultaneously and stereospecifically pyruvate and lactate with concomitant interconversion of NADH and NAD(+). This Sus scrofa (Pig) protein is L-lactate dehydrogenase A chain (LDHA).